The following is a 391-amino-acid chain: Elongation factor Tu 1 (391 aa).

The tr-type G domain maps to 10–201 (KPHVNIGTIG…AVDSYIPTPE (192 aa)). The G1 stretch occupies residues 19 to 26 (GHVDHGKT). 19 to 26 (GHVDHGKT) lines the GTP pocket. Residue Thr26 coordinates Mg(2+). The segment at 55 to 59 (GITIS) is G2. Residues 76-79 (DCPG) are G3. Residues 76–80 (DCPGH) and 131–134 (NKVD) each bind GTP. The G4 stretch occupies residues 131–134 (NKVD). Residues 169 to 171 (SAL) form a G5 region.

The protein belongs to the TRAFAC class translation factor GTPase superfamily. Classic translation factor GTPase family. EF-Tu/EF-1A subfamily. Monomer.

The protein localises to the cytoplasm. It catalyses the reaction GTP + H2O = GDP + phosphate + H(+). Functionally, GTP hydrolase that promotes the GTP-dependent binding of aminoacyl-tRNA to the A-site of ribosomes during protein biosynthesis. This is Elongation factor Tu 1 from Rhizobium etli (strain ATCC 51251 / DSM 11541 / JCM 21823 / NBRC 15573 / CFN 42).